Reading from the N-terminus, the 108-residue chain is ATP-dependent Clp protease adapter protein ClpS (108 aa).

Belongs to the ClpS family. Binds to the N-terminal domain of the chaperone ClpA.

In terms of biological role, involved in the modulation of the specificity of the ClpAP-mediated ATP-dependent protein degradation. This chain is ATP-dependent Clp protease adapter protein ClpS, found in Cupriavidus necator (strain ATCC 17699 / DSM 428 / KCTC 22496 / NCIMB 10442 / H16 / Stanier 337) (Ralstonia eutropha).